The following is a 197-amino-acid chain: LexA repressor (197 aa).

Positions 28–47 form a DNA-binding region, H-T-H motif; the sequence is VREIARRFRITPRGALLHLI. Active-site for autocatalytic cleavage activity residues include Ser-119 and Lys-156.

This sequence belongs to the peptidase S24 family. As to quaternary structure, homodimer.

It carries out the reaction Hydrolysis of Ala-|-Gly bond in repressor LexA.. Functionally, represses a number of genes involved in the response to DNA damage (SOS response), including recA and lexA. In the presence of single-stranded DNA, RecA interacts with LexA causing an autocatalytic cleavage which disrupts the DNA-binding part of LexA, leading to derepression of the SOS regulon and eventually DNA repair. The protein is LexA repressor of Thermotoga petrophila (strain ATCC BAA-488 / DSM 13995 / JCM 10881 / RKU-1).